A 227-amino-acid polypeptide reads, in one-letter code: Germin-like protein 3-5 (227 aa).

The N-terminal stretch at 1 to 29 is a signal peptide; that stretch reads MEYGFKAAGLVFVVLLLQQAPVLIRATDA. Residues Cys36 and Cys51 are joined by a disulfide bond. Residues 65-217 enclose the Cupin type-1 domain; that stretch reads SKIATGGDVN…ALRVDAGVVE (153 aa). N-linked (GlcNAc...) asparagine glycans are attached at residues Asn78 and Asn81. Mn(2+) contacts are provided by His114, His116, Glu121, and His163.

The protein belongs to the germin family. As to quaternary structure, oligomer (believed to be a pentamer but probably hexamer).

The protein resides in the secreted. It localises to the extracellular space. It is found in the apoplast. May play a role in plant defense. Probably has no oxalate oxidase activity even if the active site is conserved. The sequence is that of Germin-like protein 3-5 from Oryza sativa subsp. japonica (Rice).